The primary structure comprises 860 residues: Leucine--tRNA ligase (860 aa).

Positions 42–52 (PYPSGRLHMGH) match the 'HIGH' region motif. The short motif at 619–623 (KMSKS) is the 'KMSKS' region element. ATP is bound at residue Lys-622.

The protein belongs to the class-I aminoacyl-tRNA synthetase family.

Its subcellular location is the cytoplasm. The enzyme catalyses tRNA(Leu) + L-leucine + ATP = L-leucyl-tRNA(Leu) + AMP + diphosphate. This is Leucine--tRNA ligase from Escherichia coli O81 (strain ED1a).